The sequence spans 109 residues: Flagellar hook-basal body complex protein FliE (109 aa).

Belongs to the FliE family.

The protein localises to the bacterial flagellum basal body. This Pseudomonas syringae pv. tomato (strain ATCC BAA-871 / DC3000) protein is Flagellar hook-basal body complex protein FliE.